Here is a 299-residue protein sequence, read N- to C-terminus: Protein-methionine-sulfoxide reductase catalytic subunit MsrP (299 aa).

Residues 1–44 (MAHRWINDLTPADITPRGAWMNRRQVMAGMAGAGLAAFAGSAQA) constitute a signal peptide (tat-type signal). Residues Asn-59, 62-63 (YE), Cys-117, Thr-152, Asn-200, Arg-205, and 216-218 (SIK) contribute to the Mo-molybdopterin site.

This sequence belongs to the MsrP family. In terms of assembly, heterodimer of a catalytic subunit (MsrP) and a heme-binding subunit (MsrQ). Mo-molybdopterin is required as a cofactor. In terms of processing, predicted to be exported by the Tat system. The position of the signal peptide cleavage has not been experimentally proven.

It localises to the periplasm. The enzyme catalyses L-methionyl-[protein] + a quinone + H2O = L-methionyl-(S)-S-oxide-[protein] + a quinol. It carries out the reaction L-methionyl-[protein] + a quinone + H2O = L-methionyl-(R)-S-oxide-[protein] + a quinol. In terms of biological role, part of the MsrPQ system that repairs oxidized periplasmic proteins containing methionine sulfoxide residues (Met-O), using respiratory chain electrons. Thus protects these proteins from oxidative-stress damage caused by reactive species of oxygen and chlorine generated by the host defense mechanisms. MsrPQ is essential for the maintenance of envelope integrity under bleach stress, rescuing a wide series of structurally unrelated periplasmic proteins from methionine oxidation. The catalytic subunit MsrP is non-stereospecific, being able to reduce both (R-) and (S-) diastereoisomers of methionine sulfoxide. The polypeptide is Protein-methionine-sulfoxide reductase catalytic subunit MsrP (Ruegeria pomeroyi (strain ATCC 700808 / DSM 15171 / DSS-3) (Silicibacter pomeroyi)).